Here is a 44-residue protein sequence, read N- to C-terminus: Large ribosomal subunit protein bL34 (44 aa).

Residues 1–26 (MQRTLGGTNRKRKRTSGFRARMRTPD) form a disordered region. Basic residues predominate over residues 9 to 22 (NRKRKRTSGFRARM).

The protein belongs to the bacterial ribosomal protein bL34 family.

The protein is Large ribosomal subunit protein bL34 of Trichormus variabilis (strain ATCC 29413 / PCC 7937) (Anabaena variabilis).